Consider the following 206-residue polypeptide: MHNIKVGTKNPFLSGRKRPPFEEVEAAIRTFLLWIGENPNREGLLDTPGRVAKAYRDLFTGYDESVEEILGTVFEEVSGYNEPVIMKDLSFYSHCEHHMIPIVGKAHIAYFPDEKIVGLSKIARVVNVFSRRLQTQEAMTAQIANALETHLKPRGVAVLIEAEHMCMTMRGVQKQGAKTITTSFHGSYEKDQVAQAHFMMIVRRSS.

The Zn(2+) site is built by C95, H98, and C166.

Belongs to the GTP cyclohydrolase I family. As to quaternary structure, toroid-shaped homodecamer, composed of two pentamers of five dimers.

The enzyme catalyses GTP + H2O = 7,8-dihydroneopterin 3'-triphosphate + formate + H(+). Its pathway is cofactor biosynthesis; 7,8-dihydroneopterin triphosphate biosynthesis; 7,8-dihydroneopterin triphosphate from GTP: step 1/1. This Bartonella henselae (strain ATCC 49882 / DSM 28221 / CCUG 30454 / Houston 1) (Rochalimaea henselae) protein is GTP cyclohydrolase 1.